We begin with the raw amino-acid sequence, 599 residues long: Serine/threonine-protein kinase haspin homolog (599 aa).

The region spanning 287-599 is the Protein kinase domain; the sequence is PESIVKIGEG…FSDMLMDQIS (313 aa). Residues 293–301, K310, 407–412, 448–453, and 486–488 each bind ATP; these read IGEGTYGEA, EHGGKD, DLHWGN, and DFT. Catalysis depends on D448, which acts as the Proton acceptor.

This sequence belongs to the protein kinase superfamily. Ser/Thr protein kinase family. Haspin subfamily. In terms of tissue distribution, expressed in meristems and primordia of root tips, lateral roots, shoot apex, leaves and flowers.

The protein localises to the cytoplasm. The protein resides in the perinuclear region. It is found in the nucleus. Its subcellular location is the chromosome. It localises to the cytoskeleton. The protein localises to the phragmoplast. The enzyme catalyses L-seryl-[protein] + ATP = O-phospho-L-seryl-[protein] + ADP + H(+). It catalyses the reaction L-threonyl-[protein] + ATP = O-phospho-L-threonyl-[protein] + ADP + H(+). Its function is as follows. Threonine-protein kinase that phosphorylates histone H3 in vitro at 'Thr-3' (H3T3ph) and 'Thr-11' (H3T11ph), but not at 'Ser-10' (H3S10ph) or 'Ser-28' (H3S28ph). Plays a role in mitotic cell division during plant growth. Threonine-protein kinase that phosphorylates histone H3 in vitro at 'Thr-3' (H3T3ph), but not at 'Thr-11' (H3T11ph), 'Ser-10' (H3S10ph) or 'Ser-28' (H3S28ph). Involved in histone H3 phosphorylation in mitotic cells. Contributes to organ and plant development, as well as embryonic patterning. This chain is Serine/threonine-protein kinase haspin homolog, found in Arabidopsis thaliana (Mouse-ear cress).